Here is a 305-residue protein sequence, read N- to C-terminus: Probable alpha-L-glutamate ligase (305 aa).

An ATP-grasp domain is found at 119-301; that stretch reads LQVLAAQHIP…IAGLIIDYLL (183 aa). ATP contacts are provided by residues Lys-155, 192–193, Asp-201, and 225–227; these read DF and RAN. Residues Asp-262, Glu-274, and Asn-276 each contribute to the Mg(2+) site. Residues Asp-262, Glu-274, and Asn-276 each contribute to the Mn(2+) site.

It belongs to the RimK family. Mg(2+) is required as a cofactor. Requires Mn(2+) as cofactor.

The protein is Probable alpha-L-glutamate ligase of Haemophilus ducreyi (strain 35000HP / ATCC 700724).